A 486-amino-acid polypeptide reads, in one-letter code: 2-succinylbenzoate--CoA ligase (486 aa).

It belongs to the ATP-dependent AMP-binding enzyme family. MenE subfamily.

It carries out the reaction 2-succinylbenzoate + ATP + CoA = 2-succinylbenzoyl-CoA + AMP + diphosphate. Its pathway is quinol/quinone metabolism; 1,4-dihydroxy-2-naphthoate biosynthesis; 1,4-dihydroxy-2-naphthoate from chorismate: step 5/7. The protein operates within quinol/quinone metabolism; menaquinone biosynthesis. Functionally, converts 2-succinylbenzoate (OSB) to 2-succinylbenzoyl-CoA (OSB-CoA). The polypeptide is 2-succinylbenzoate--CoA ligase (Bacillus subtilis (strain 168)).